The sequence spans 350 residues: Small ribosomal subunit biogenesis GTPase RsgA (350 aa).

A disordered region spans residues 1 to 30 (MSKRKLTQNQQRRIQSNNAKTLHRHQHRHK). A compositionally biased stretch (polar residues) spans 7 to 20 (TQNQQRRIQSNNAK). Residues 21 to 30 (TLHRHQHRHK) show a composition bias toward basic residues. The region spanning 106–274 (HNQIVRPDYY…LIDSPGIREF (169 aa)) is the CP-type G domain. Residues 162–165 (NKAD) and 216–224 (GQSGVGKSS) each bind GTP. Positions 298, 303, 305, and 311 each coordinate Zn(2+).

It belongs to the TRAFAC class YlqF/YawG GTPase family. RsgA subfamily. As to quaternary structure, monomer. Associates with 30S ribosomal subunit, binds 16S rRNA. Zn(2+) serves as cofactor.

It localises to the cytoplasm. One of several proteins that assist in the late maturation steps of the functional core of the 30S ribosomal subunit. Helps release RbfA from mature subunits. May play a role in the assembly of ribosomal proteins into the subunit. Circularly permuted GTPase that catalyzes slow GTP hydrolysis, GTPase activity is stimulated by the 30S ribosomal subunit. The polypeptide is Small ribosomal subunit biogenesis GTPase RsgA (Histophilus somni (strain 2336) (Haemophilus somnus)).